Consider the following 452-residue polypeptide: tRNA-2-methylthio-N(6)-dimethylallyladenosine synthase (452 aa).

The MTTase N-terminal domain maps to 3 to 118 (KKVFIKTYGC…LPQLLAERER (116 aa)). Residues cysteine 12, cysteine 49, cysteine 81, cysteine 155, cysteine 159, and cysteine 162 each contribute to the [4Fe-4S] cluster site. One can recognise a Radical SAM core domain in the interval 141 to 379 (RVEGASAFVS…QTVINDSIKR (239 aa)). One can recognise a TRAM domain in the interval 382 to 445 (ESRLGTVQRI…SFTLRGEVVT (64 aa)).

The protein belongs to the methylthiotransferase family. MiaB subfamily. In terms of assembly, monomer. [4Fe-4S] cluster serves as cofactor.

It localises to the cytoplasm. The enzyme catalyses N(6)-dimethylallyladenosine(37) in tRNA + (sulfur carrier)-SH + AH2 + 2 S-adenosyl-L-methionine = 2-methylsulfanyl-N(6)-dimethylallyladenosine(37) in tRNA + (sulfur carrier)-H + 5'-deoxyadenosine + L-methionine + A + S-adenosyl-L-homocysteine + 2 H(+). Functionally, catalyzes the methylthiolation of N6-(dimethylallyl)adenosine (i(6)A), leading to the formation of 2-methylthio-N6-(dimethylallyl)adenosine (ms(2)i(6)A) at position 37 in tRNAs that read codons beginning with uridine. The polypeptide is tRNA-2-methylthio-N(6)-dimethylallyladenosine synthase (Albidiferax ferrireducens (strain ATCC BAA-621 / DSM 15236 / T118) (Rhodoferax ferrireducens)).